A 491-amino-acid polypeptide reads, in one-letter code: Ribosome biogenesis protein YTM1 (491 aa).

The segment at Ile-8 to Arg-103 is ubiquitin-like (UBL) domain. The sufficient for interaction with ERB1 and association with 66S pre-ribosomes stretch occupies residues Ser-113–Lys-491. WD repeat units lie at residues Arg-128–Tyr-167, Gly-169–Gln-207, Gly-241–Ile-280, Gly-318–Thr-358, Thr-360–Asn-399, Gly-409–Thr-449, and Ser-456–Lys-491. Residues Val-205–Glu-228 form a disordered region. Residues Gln-207 to Asn-225 show a composition bias toward acidic residues.

The protein belongs to the WD repeat WDR12/YTM1 family. As to quaternary structure, component of the NOP7 complex, composed of ERB1, NOP7 and YTM1. The complex is held together by ERB1, which interacts with NOP7 via its N-terminal domain and with YTM1 via a high-affinity interaction between the seven-bladed beta-propeller domains of the 2 proteins. The NOP7 complex associates with the 66S pre-ribosome. Interacts (via UBL domain) with MDN1 (via VWFA/MIDAS domain).

Its subcellular location is the nucleus. The protein localises to the nucleolus. It is found in the nucleoplasm. Functionally, component of the NOP7 complex, which is required for maturation of the 25S and 5.8S ribosomal RNAs and formation of the 60S ribosome. This Lodderomyces elongisporus (strain ATCC 11503 / CBS 2605 / JCM 1781 / NBRC 1676 / NRRL YB-4239) (Yeast) protein is Ribosome biogenesis protein YTM1.